The following is a 467-amino-acid chain: MTELFRHSKHLLASLALLSVLGLMLAMHPSPSAIERIMARGELVVLTRPSNTTYYEDQHGFTGMEYELAKGFADSQGVELRILESDDLSYIRYAIRKGTADIVAAGLIATPERSKSLRFSTAYQNVDVLLVRRLTSHRITDLSQLNQQTIAVSAGSSHAELLLKAQLESPELEFQEVENATPEQLLALVEDGQVDYTLINSNSYTLQRALWPDLVADYTVARDMPLSWAFNPKDDKSLYQEAQRYLTQAKADGTTAKLEDRFYGHVEQFNLYAARSFMRHLDDRLPLYEDLFKQAEEDSGFDWRLLAALAYQESLWDPQAISPTGVKGLMMLTNNTARQMGISDRTDPSQSIRAGAGYLRRTHARIPDRIPEPSRTWMALAAYNVGYGHLEDARVLTQRQGGNPDNWQDVKQRLPLLAKPAYADQLRYGTAPGGQAVAYVRHIRRYYDLLVWAENSRRRDDTLIALN.

A signal peptide spans 1–33 (MTELFRHSKHLLASLALLSVLGLMLAMHPSPSA). Residues 34–266 (IERIMARGEL…KLEDRFYGHV (233 aa)) are non-LT domain. The tract at residues 268–467 (QFNLYAARSF…RRDDTLIALN (200 aa)) is LT domain. Glu-313 is a catalytic residue.

This sequence in the N-terminal section; belongs to the bacterial solute-binding protein 3 family. In the C-terminal section; belongs to the transglycosylase Slt family.

It localises to the cell outer membrane. The catalysed reaction is Exolytic cleavage of the (1-&gt;4)-beta-glycosidic linkage between N-acetylmuramic acid (MurNAc) and N-acetylglucosamine (GlcNAc) residues in peptidoglycan, from either the reducing or the non-reducing ends of the peptidoglycan chains, with concomitant formation of a 1,6-anhydrobond in the MurNAc residue.. In terms of biological role, murein-degrading enzyme that degrades murein glycan strands and insoluble, high-molecular weight murein sacculi, with the concomitant formation of a 1,6-anhydromuramoyl product. Lytic transglycosylases (LTs) play an integral role in the metabolism of the peptidoglycan (PG) sacculus. Their lytic action creates space within the PG sacculus to allow for its expansion as well as for the insertion of various structures such as secretion systems and flagella. The protein is Membrane-bound lytic murein transglycosylase F of Alcanivorax borkumensis (strain ATCC 700651 / DSM 11573 / NCIMB 13689 / SK2).